A 122-amino-acid chain; its full sequence is Small ribosomal subunit protein uS13 (122 aa).

Positions 93-122 (RRGLPVRGQKTKTNARTRKGPKKTMANKKK) are disordered.

Belongs to the universal ribosomal protein uS13 family. In terms of assembly, part of the 30S ribosomal subunit. Forms a loose heterodimer with protein S19. Forms two bridges to the 50S subunit in the 70S ribosome.

Its function is as follows. Located at the top of the head of the 30S subunit, it contacts several helices of the 16S rRNA. In the 70S ribosome it contacts the 23S rRNA (bridge B1a) and protein L5 of the 50S subunit (bridge B1b), connecting the 2 subunits; these bridges are implicated in subunit movement. Contacts the tRNAs in the A and P-sites. This is Small ribosomal subunit protein uS13 from Clostridium botulinum (strain Alaska E43 / Type E3).